The sequence spans 338 residues: Ketol-acid reductoisomerase (NADP(+)) (338 aa).

A KARI N-terminal Rossmann domain is found at 1 to 181; it reads MQIYYDKDAD…GGGRAGIIET (181 aa). NADP(+) contacts are provided by residues 24–27, R47, S50, S52, and 82–85; these read YGSQ and DEHQ. Residue H107 is part of the active site. G133 serves as a coordination point for NADP(+). In terms of domain architecture, KARI C-terminal knotted spans 182–327; it reads TFREETETDL…ARLRDMMPWI (146 aa). The Mg(2+) site is built by D190, E194, E226, and E230. S251 is a binding site for substrate.

The protein belongs to the ketol-acid reductoisomerase family. It depends on Mg(2+) as a cofactor.

It catalyses the reaction (2R)-2,3-dihydroxy-3-methylbutanoate + NADP(+) = (2S)-2-acetolactate + NADPH + H(+). The enzyme catalyses (2R,3R)-2,3-dihydroxy-3-methylpentanoate + NADP(+) = (S)-2-ethyl-2-hydroxy-3-oxobutanoate + NADPH + H(+). It functions in the pathway amino-acid biosynthesis; L-isoleucine biosynthesis; L-isoleucine from 2-oxobutanoate: step 2/4. Its pathway is amino-acid biosynthesis; L-valine biosynthesis; L-valine from pyruvate: step 2/4. In terms of biological role, involved in the biosynthesis of branched-chain amino acids (BCAA). Catalyzes an alkyl-migration followed by a ketol-acid reduction of (S)-2-acetolactate (S2AL) to yield (R)-2,3-dihydroxy-isovalerate. In the isomerase reaction, S2AL is rearranged via a Mg-dependent methyl migration to produce 3-hydroxy-3-methyl-2-ketobutyrate (HMKB). In the reductase reaction, this 2-ketoacid undergoes a metal-dependent reduction by NADPH to yield (R)-2,3-dihydroxy-isovalerate. This is Ketol-acid reductoisomerase (NADP(+)) from Methylococcus capsulatus (strain ATCC 33009 / NCIMB 11132 / Bath).